The sequence spans 109 residues: Probable sulredoxin (109 aa).

Residues 3-107 (WKRTISAKAL…IRDNGGWIEV (105 aa)) form the Rieske domain. [2Fe-2S] cluster-binding residues include Cys-43, His-45, Cys-62, and His-65.

This sequence belongs to the SDX family. The cofactor is [2Fe-2S] cluster.

It is found in the cytoplasm. This is Probable sulredoxin (sdx) from Saccharolobus solfataricus (strain ATCC 35092 / DSM 1617 / JCM 11322 / P2) (Sulfolobus solfataricus).